Here is a 453-residue protein sequence, read N- to C-terminus: Chromosomal replication initiator protein DnaA (453 aa).

Residues 1–74 (MKEKQFWNRI…GFEIYDAEIT (74 aa)) are domain I, interacts with DnaA modulators. A domain II region spans residues 74 to 113 (TPHYIFTKPQDTTSSQVEEATNLTLYDYSPKLVSIPYSDT). Positions 114–331 (GLKEKYTFDN…GAINDITLIA (218 aa)) are domain III, AAA+ region. Gly158, Gly160, Lys161, and Thr162 together coordinate ATP. Residues 332-453 (RVKKIKDITI…EIESIKKKIK (122 aa)) form a domain IV, binds dsDNA region.

This sequence belongs to the DnaA family. In terms of assembly, oligomerizes as a right-handed, spiral filament on DNA at oriC.

It is found in the cytoplasm. Plays an essential role in the initiation and regulation of chromosomal replication. ATP-DnaA binds to the origin of replication (oriC) to initiate formation of the DNA replication initiation complex once per cell cycle. Binds the DnaA box (a 9 base pair repeat at the origin) and separates the double-stranded (ds)DNA. Forms a right-handed helical filament on oriC DNA; dsDNA binds to the exterior of the filament while single-stranded (ss)DNA is stabiized in the filament's interior. The ATP-DnaA-oriC complex binds and stabilizes one strand of the AT-rich DNA unwinding element (DUE), permitting loading of DNA polymerase. After initiation quickly degrades to an ADP-DnaA complex that is not apt for DNA replication. Binds acidic phospholipids. This Streptococcus pneumoniae (strain P1031) protein is Chromosomal replication initiator protein DnaA.